Here is a 452-residue protein sequence, read N- to C-terminus: Pup--protein ligase (452 aa).

Glu-9 is a binding site for Mg(2+). Arg-53 is an ATP binding site. Residue Tyr-55 coordinates Mg(2+). The active-site Proton acceptor is Asp-57. Glu-63 contributes to the Mg(2+) binding site. Residues Thr-66 and Trp-419 each coordinate ATP.

The protein belongs to the Pup ligase/Pup deamidase family. Pup-conjugating enzyme subfamily.

It carries out the reaction ATP + [prokaryotic ubiquitin-like protein]-L-glutamate + [protein]-L-lysine = ADP + phosphate + N(6)-([prokaryotic ubiquitin-like protein]-gamma-L-glutamyl)-[protein]-L-lysine.. It participates in protein degradation; proteasomal Pup-dependent pathway. The protein operates within protein modification; protein pupylation. Catalyzes the covalent attachment of the prokaryotic ubiquitin-like protein modifier Pup to the proteasomal substrate proteins, thereby targeting them for proteasomal degradation. This tagging system is termed pupylation. The ligation reaction involves the side-chain carboxylate of the C-terminal glutamate of Pup and the side-chain amino group of a substrate lysine. The chain is Pup--protein ligase from Nocardia farcinica (strain IFM 10152).